The sequence spans 137 residues: Prostate and testis expressed protein 13 (137 aa).

The N-terminal stretch at 1 to 20 is a signal peptide; that stretch reads MFQKLLLSVFIILLMDVGER. The region spanning 28–114 is the UPAR/Ly6 domain; sequence RHCNLCSHYD…CIDRNYCNDG (87 aa). Cystine bridges form between C30–C60, C33–C41, C48–C84, C87–C104, and C105–C111. An N-linked (GlcNAc...) asparagine glycan is attached at N57.

Belongs to the PATE family. As to expression, strongly expressed in the epididymis, including the initial segment, caput, corpus and cauda regions. Weakly expressed in prostate.

It localises to the secreted. This chain is Prostate and testis expressed protein 13, found in Mus musculus (Mouse).